The following is a 213-amino-acid chain: Glutathione S-transferase PARB (213 aa).

In terms of domain architecture, GST N-terminal spans 1–82; it reads MAIKVHGSPM…YIAHVYADNG (82 aa). Glutathione is bound by residues serine 11, 12–13, 40–41, 53–54, and 66–67; these read TA, HK, QV, and ES. A GST C-terminal domain is found at 89-213; the sequence is DPKKMPSMSV…WVKGLEKLQK (125 aa).

It belongs to the GST superfamily. Phi family.

It catalyses the reaction RX + glutathione = an S-substituted glutathione + a halide anion + H(+). In terms of biological role, conjugation of reduced glutathione to a wide number of exogenous and endogenous hydrophobic electrophiles. In Nicotiana tabacum (Common tobacco), this protein is Glutathione S-transferase PARB.